The chain runs to 775 residues: MGSFLRSFRHNGGSTAPSVGAVPAKKEPQPPPMTPLEKRLLDMGPIREDGSDKFYGMENYGNTCYCNSILQCLYYSVPFREAVINYPTRTPIESLEAALAKSLRYPNPNAQLEAEAQAEKQKAANAQRPGMPPNPQQKPEDKDSPEYKKKMALQTLPLLETQNNASSYGMSESLFTSLKDIFESVVGSQSRIGIIRPQQFLEVLRRDHEMFRTAMHQDAHEFLNLLLNEVVANVEAEASKQPPIEKSLPAPETADSVDQSSSTGSKTPNTTRWVHELFEGLLTSETQCLTCEKVSQRDEVFLDLSVDLEQHSSVTSCLRKFSAEEMLCERNKFHCDNCGGLQEAEKRMKIKRLPRILALHLKRFKYTEDLQRLQKLFHRVVYPYHLRLFNTTDDAEDPDRLYELYAVVVHIGGGPYHGHYVAIIKTEDRGWLLFDDEMVEPVDKNYVKNFFGDKPGLACAYVLFYQETTLEAVLKEQEQENMDSNLAATDANDTILKQNGFPQSPLAHVHSASQIPSHEDNLRPNGLRRAPTAPQLSTHHEHGDPESAPFSPLSPLSPLSPLSPLSQTPPVPPVPERVTTVATPPKNDALAKKERAREEKERKAAEKEREKAEKLRRKEQEARMKENQRREEAELKAALEMSKASKAEEDRRLSHENGKEKQGGSLSRLKRGSKSLSHRLGKDKETRSVSSDLPPVPIPEHSTLSQTGPTSEQQQQQQQQQSPPNHDQPPNSPQLGKPTIREDEQVNHKDSKHERTGHGKWRSFSLRKKSFSILS.

The interval 1–45 is disordered; the sequence is MGSFLRSFRHNGGSTAPSVGAVPAKKEPQPPPMTPLEKRLLDMGP. Positions 36 to 45 are enriched in basic and acidic residues; it reads LEKRLLDMGP. The USP domain occupies 55–468; that stretch reads YGMENYGNTC…CAYVLFYQET (414 aa). The Nucleophile role is filled by C64. 2 disordered regions span residues 113 to 146 and 238 to 269; these read EAEA…DSPE and ASKQ…KTPN. Positions 256–269 are enriched in polar residues; it reads SVDQSSSTGSKTPN. H419 serves as the catalytic Proton acceptor. A disordered region spans residues 496-775; sequence LKQNGFPQSP…LRKKSFSILS (280 aa). Low complexity-rich tracts occupy residues 546–566 and 576–585; these read ESAP…SPLS and ERVTTVATPP. Residues 586–653 adopt a coiled-coil conformation; that stretch reads KNDALAKKER…ASKAEEDRRL (68 aa). Positions 589 to 662 are enriched in basic and acidic residues; it reads ALAKKERARE…LSHENGKEKQ (74 aa). Residues 668–679 are compositionally biased toward basic residues; that stretch reads RLKRGSKSLSHR. Over residues 705-725 the composition is skewed to low complexity; it reads SQTGPTSEQQQQQQQQQSPPN. Residues 739–757 show a composition bias toward basic and acidic residues; that stretch reads TIREDEQVNHKDSKHERTG. Basic residues predominate over residues 758–775; it reads HGKWRSFSLRKKSFSILS.

Belongs to the peptidase C19 family. Interacts with creA, creC and qutD.

It catalyses the reaction Thiol-dependent hydrolysis of ester, thioester, amide, peptide and isopeptide bonds formed by the C-terminal Gly of ubiquitin (a 76-residue protein attached to proteins as an intracellular targeting signal).. In terms of biological role, ubiquitin thioesterase component of the regulatory network controlling carbon source utilization through ubiquitination and deubiquitination involving creA, creB, creC, creD and acrB. Deubiquitinates the creA catabolic repressor and the quinate permease qutD. Also plays a role in response to carbon starvation and the control of extracellular proteases activity. This chain is Probable ubiquitin carboxyl-terminal hydrolase creB (creB), found in Aspergillus fumigatus (strain ATCC MYA-4609 / CBS 101355 / FGSC A1100 / Af293) (Neosartorya fumigata).